The sequence spans 3779 residues: Protein DDB_G0268328 (3779 aa).

12 disordered regions span residues 24–56 (RQIKSQNKLQNKSQNNGNNNNNKDNNNINKDGS), 1001–1028 (HEDEEEEGDGDNSNNSNSQDSDGDDDDD), 1137–1165 (QDSTLPKRKQHGYYHQQQQQQQYHQQQQQ), 1513–1538 (PTNSIYNNNNNNNNNNNNTNSSSLLS), 1656–1690 (ETTVLEKETKETKDNNLENNNNNTNNSNNNNNNKE), 2027–2054 (SNSSNNNNNNNDGSTTSTTTLNRSDSNN), 2144–2184 (NNNN…NNSS), 2280–2325 (ISTT…NEQQ), 2508–2527 (QINNNNNNNEKEEEEEREEG), 2720–2748 (DGNNNNNNNNNQNNNNQNNNNNQNNNDSS), 2975–3030 (ESND…DSIK), and 3427–3450 (QSNTLNGTGGGGGNGGGNNGSGKL). Composition is skewed to low complexity over residues 26–56 (IKSQNKLQNKSQNNGNNNNNKDNNNINKDGS), 1011–1020 (DNSNNSNSQD), 1149–1165 (YYHQQQQQQQYHQQQQQ), and 1515–1538 (NSIYNNNNNNNNNNNNTNSSSLLS). Over residues 1656-1671 (ETTVLEKETKETKDNN) the composition is skewed to basic and acidic residues. A compositionally biased stretch (low complexity) spans 1672-1687 (LENNNNNTNNSNNNNN). 2 stretches are compositionally biased toward low complexity: residues 2144 to 2182 (NNNNNNNNNNNNNNNNNNNNNNNNNNNNNNNNNNNNNNN) and 2285 to 2322 (NNNNNNNNNNNNNNNNNNNNNNNNNNNNNNNNNNNNNN). Low complexity-rich tracts occupy residues 2722–2745 (NNNNNNNNNQNNNNQNNNNNQNNN) and 3015–3030 (SVNNNNNNNSNSDSIK). Gly residues predominate over residues 3433–3446 (GTGGGGGNGGGNNG).

The sequence is that of Protein DDB_G0268328 from Dictyostelium discoideum (Social amoeba).